We begin with the raw amino-acid sequence, 77 residues long: Epoxide hydrolase (77 aa).

In terms of assembly, monomer.

It carries out the reaction an epoxide + H2O = an ethanediol. Its function is as follows. This enzyme acts on aliphatic epoxides. Its substrates include epichlorohydrin, epibromohydrin, epoxyoctane and styrene epoxide. This chain is Epoxide hydrolase, found in Pseudomonas sp. (strain AD1).